The primary structure comprises 151 residues: Ribosome maturation factor RimP (151 aa).

Belongs to the RimP family.

It is found in the cytoplasm. Its function is as follows. Required for maturation of 30S ribosomal subunits. The sequence is that of Ribosome maturation factor RimP from Shewanella putrefaciens (strain CN-32 / ATCC BAA-453).